We begin with the raw amino-acid sequence, 673 residues long: MEPILNQGYGYGFALGLGAAFALLMAIITKVLTACMGQTQNSERFSTASRSVKSGLISSSTVSAWTWPATLLSSGAWSYTYGIMGGFMYGVGGTIQITLFLFLAIQIKKKAPAAHTVSECFFIRFGKLGHCVYLFYCISTNVLVSSLLLLGGSQGFSSTTGMNTVAACFLLPLGVMVYTTLGGLKATFISDWIHTVMIYIILIVTCYTVYCSSSLIGSPAKMYDMLKEVQEVYPATGGQSYLSFKNSEMMYLTWSVMIGGLSSVFGDPGYSQRAIASDAKSVFQGYLMGGLCWWIIPMALGSSAGLACRALLLNPASVTYPNVLSSVEISSGLPVIYGMASIFGKSGAAAGLVMLFMSITSATSAELIAFSSVTTYDIFRAYINPAANGKQLVRTAHLSVIGFSLFIGALSVGFNYAGVTAGWLLTFLGIILTPEVSAVTLCLFWNKMTRFSLVVGAPFGTITGVVCWLASTYSFCDGIVNKDTVMTSKACFVGNIVSMASSPLYIVLLSYIWPDKETFDLNQFRNITVGDDIDTTELNAIVSQLKDERILKLQTYWSIGINLFILIGCYVIIPTALLGSNHDLSKSSFSGLIIVCLIWILVAAIYIILFPLWQGRKSLANVISHIIRLKAPENILLDGLTPKQSSEDVGDATSFHMDKLDKEKEKSSELKTA.

Helical transmembrane passes span 8-28, 83-103, 132-152, 164-184, 196-218, 249-269, 287-307, 336-356, 391-411, 424-446, 451-471, 492-512, 559-579, and 592-612; these read GYGY…MAII, IMGG…FLFL, VYLF…LLGG, TVAA…LGGL, VMIY…LIGS, MMYL…GDPG, LMGG…AGLA, IYGM…VMLF, QLVR…GALS, LLTF…LFWN, FSLV…WLAS, FVGN…LSYI, IGIN…ALLG, and LIIV…LFPL.

The protein belongs to the sodium:solute symporter (SSF) (TC 2.A.21) family.

Its subcellular location is the endoplasmic reticulum membrane. Involved in active transport of urea. The chain is Probable urea active transporter 2 (dur3-2) from Schizosaccharomyces pombe (strain 972 / ATCC 24843) (Fission yeast).